The primary structure comprises 2753 residues: Maltase-glucoamylase (2753 aa).

Topologically, residues Met1 to Glu13 are cytoplasmic. A helical; Signal-anchor for type II membrane protein membrane pass occupies residues Ile14–Leu34. Residues Ala35–Leu2753 lie on the Lumenal side of the membrane. Positions Ser41–Ser87 are disordered. Positions Pro44–Pro85 are enriched in low complexity. In terms of domain architecture, P-type 1 spans Ala88 to Lys134. 3 disulfides stabilise this stretch: Cys90–Cys118, Cys101–Cys117, and Cys112–Cys130. Residue Asn135 is glycosylated (N-linked (GlcNAc...) asparagine). Residue Asp289 participates in acarbose binding. An N-linked (GlcNAc...) asparagine glycan is attached at Asn295. A maltase region spans residues Pro356–Val737. Residue Asp413 participates in acarbose binding. 2 positions are modified to sulfotyrosine: Tyr416 and Tyr425. N-linked (GlcNAc...) asparagine glycosylation is found at Asn457, Asn458, and Asn479. Asp529 acts as the Nucleophile in catalysis. Glu532 is an active-site residue. 2 residues coordinate acarbose: Arg612 and Asp628. Cys659 and Cys670 form a disulfide bridge. Residue His686 participates in acarbose binding. N-linked (GlcNAc...) asparagine glycans are attached at residues Asn707, Asn749, Asn827, Asn885, Asn912, Asn977, Asn989, and Asn1255. In terms of domain architecture, P-type 2 spans Trp954–Asn1000. Cystine bridges form between Cys966/Cys983 and Cys978/Cys996. Residues Thr1221–Thr1632 are glucoamylase. At Tyr1282 the chain carries Sulfotyrosine. N-linked (GlcNAc...) asparagine glycans are attached at residues Asn1323, Asn1364, and Asn1388. The active-site Nucleophile is the Asp1420. Glu1423 is a catalytic residue. Asp1526 acts as the Proton donor in catalysis. The region spanning Trp1850–Asn1896 is the P-type 3 domain. Intrachain disulfides connect Cys1862-Cys1879 and Cys1874-Cys1892. Residues Asn2499, Asn2568, Asn2738, and Asn2743 are each glycosylated (N-linked (GlcNAc...) asparagine).

This sequence belongs to the glycosyl hydrolase 31 family. In terms of assembly, monomer. N- and O-glycosylated. Post-translationally, does not undergo intracellular or extracellular proteolytic cleavage. In terms of processing, sulfated. In terms of tissue distribution, broadly expressed. Highly expressed in small intestine. Expressed in granulocytes.

The protein resides in the apical cell membrane. It catalyses the reaction Hydrolysis of terminal, non-reducing (1-&gt;4)-linked alpha-D-glucose residues with release of alpha-D-glucose.. The enzyme catalyses D-maltoheptaose + H2O = D-maltohexaose + alpha-D-glucose. It carries out the reaction D-maltohexaose + H2O = D-maltopentaose + alpha-D-glucose. The catalysed reaction is D-maltopentaose + H2O = D-maltotetraose + alpha-D-glucose. It catalyses the reaction D-maltotetraose + H2O = D-maltotriose + alpha-D-glucose. The enzyme catalyses D-maltotriose + H2O = D-maltose + alpha-D-glucose. It carries out the reaction D-maltose + H2O = alpha-D-glucose + D-glucose. The catalysed reaction is nigerose + H2O = alpha-D-glucose + D-glucose. It catalyses the reaction kojibiose + H2O = alpha-D-glucose + D-glucose. The enzyme catalyses isomaltose + H2O = alpha-D-glucose + D-glucose. It carries out the reaction 6-O-alpha-D-glucopyranosyl-D-fructose + H2O = alpha-D-glucose + D-fructose. The protein operates within carbohydrate degradation. With respect to regulation, down-regulated at high oligomaltose concentration as it occurs during the mealtime. Down-regulated by anti-diabetic drug acarbose. Alpha-(1,4) exo-glucosidase involved in breakdown of dietary starch oligosaccharides in small intestine. Cleaves the non-reducing alpha-(1,4)-linked glucose residue in linear dextrins with retention of anomeric center stereochemistry. Mainly hydrolyzes short length oligomaltoses having two to seven glucose residues. Can cleave alpha-(1,2), alpha-(1,3) and alpha-(1,6) glycosidic linkages with lower efficiency, whereas beta glycosidic linkages are usually not hydrolyzed. This is Maltase-glucoamylase from Homo sapiens (Human).